Reading from the N-terminus, the 158-residue chain is Large ribosomal subunit protein uL11 (158 aa).

It belongs to the universal ribosomal protein uL11 family. As to quaternary structure, part of the ribosomal stalk of the 50S ribosomal subunit. Interacts with L10 and the large rRNA to form the base of the stalk. L10 forms an elongated spine to which L12 dimers bind in a sequential fashion forming a multimeric L10(L12)X complex.

Forms part of the ribosomal stalk which helps the ribosome interact with GTP-bound translation factors. The protein is Large ribosomal subunit protein uL11 of Methanocella arvoryzae (strain DSM 22066 / NBRC 105507 / MRE50).